Reading from the N-terminus, the 369-residue chain is Aminomethyltransferase (369 aa).

Belongs to the GcvT family. As to quaternary structure, the glycine cleavage system is composed of four proteins: P, T, L and H.

It catalyses the reaction N(6)-[(R)-S(8)-aminomethyldihydrolipoyl]-L-lysyl-[protein] + (6S)-5,6,7,8-tetrahydrofolate = N(6)-[(R)-dihydrolipoyl]-L-lysyl-[protein] + (6R)-5,10-methylene-5,6,7,8-tetrahydrofolate + NH4(+). Functionally, the glycine cleavage system catalyzes the degradation of glycine. This Xanthomonas campestris pv. campestris (strain 8004) protein is Aminomethyltransferase.